Reading from the N-terminus, the 253-residue chain is Imidazole glycerol phosphate synthase subunit HisF (253 aa).

Active-site residues include aspartate 11 and aspartate 130.

It belongs to the HisA/HisF family. As to quaternary structure, heterodimer of HisH and HisF.

It is found in the cytoplasm. It catalyses the reaction 5-[(5-phospho-1-deoxy-D-ribulos-1-ylimino)methylamino]-1-(5-phospho-beta-D-ribosyl)imidazole-4-carboxamide + L-glutamine = D-erythro-1-(imidazol-4-yl)glycerol 3-phosphate + 5-amino-1-(5-phospho-beta-D-ribosyl)imidazole-4-carboxamide + L-glutamate + H(+). Its pathway is amino-acid biosynthesis; L-histidine biosynthesis; L-histidine from 5-phospho-alpha-D-ribose 1-diphosphate: step 5/9. IGPS catalyzes the conversion of PRFAR and glutamine to IGP, AICAR and glutamate. The HisF subunit catalyzes the cyclization activity that produces IGP and AICAR from PRFAR using the ammonia provided by the HisH subunit. This chain is Imidazole glycerol phosphate synthase subunit HisF, found in Desulfitobacterium hafniense (strain DSM 10664 / DCB-2).